The primary structure comprises 743 residues: Cap-specific mRNA (nucleoside-2'-O-)-methyltransferase 2 (743 aa).

One can recognise an Adrift-type SAM-dependent 2'-O-MTase domain in the interval 113–326 (ELCTQAWAKF…LYIVCLDYQA (214 aa)). The active site involves Lys121. S-adenosyl-L-methionine contacts are provided by Gly152, Trp171, and Asp239. Residue Asp239 is part of the active site. The active-site Proton acceptor is the Lys279.

The protein localises to the nucleus. The protein resides in the cytoplasm. The catalysed reaction is a 5'-end (N(7)-methyl 5'-triphosphoguanosine)-(2'-O-methyl-ribonucleoside)-(ribonucleotide) in mRNA + S-adenosyl-L-methionine = a 5'-end (N(7)-methyl 5'-triphosphoguanosine)-(2'-O-methyl-ribonucleoside)-(2'-O-methyl-ribonucleotide) in mRNA + S-adenosyl-L-homocysteine + H(+). Functionally, S-adenosyl-L-methionine-dependent methyltransferase that mediates mRNA cap2 2'-O-ribose methylation to the 5'-cap structure of mRNAs. Methylates the ribose of the second nucleotide of a m(7)GpppG-capped mRNA and small nuclear RNA (snRNA) (cap0) to produce m(7)GpppRmpNm (cap2). The sequence is that of Cap-specific mRNA (nucleoside-2'-O-)-methyltransferase 2 (cmtr2) from Danio rerio (Zebrafish).